The chain runs to 485 residues: Glutamyl-tRNA(Gln) amidotransferase subunit A (485 aa).

Catalysis depends on charge relay system residues K79 and S154. The active-site Acyl-ester intermediate is S178.

It belongs to the amidase family. GatA subfamily. As to quaternary structure, heterotrimer of A, B and C subunits.

The enzyme catalyses L-glutamyl-tRNA(Gln) + L-glutamine + ATP + H2O = L-glutaminyl-tRNA(Gln) + L-glutamate + ADP + phosphate + H(+). Functionally, allows the formation of correctly charged Gln-tRNA(Gln) through the transamidation of misacylated Glu-tRNA(Gln) in organisms which lack glutaminyl-tRNA synthetase. The reaction takes place in the presence of glutamine and ATP through an activated gamma-phospho-Glu-tRNA(Gln). The chain is Glutamyl-tRNA(Gln) amidotransferase subunit A from Bacillus licheniformis (strain ATCC 14580 / DSM 13 / JCM 2505 / CCUG 7422 / NBRC 12200 / NCIMB 9375 / NCTC 10341 / NRRL NRS-1264 / Gibson 46).